We begin with the raw amino-acid sequence, 1490 residues long: Vacuolar protein sorting/targeting protein 10 (1490 aa).

Residues 1–21 form the signal peptide; sequence MKHLKGLLLPALLALASSAAA. The Lumenal segment spans residues 22 to 1354; the sequence is KDPLVETTPF…DFQKNHGVGG (1333 aa). The BNR 1 repeat unit spans residues 97–107; it reads WITFDQGENWD. N-linked (GlcNAc...) asparagine glycosylation is found at N285 and N309. BNR repeat units lie at residues 364-374, 426-436, and 719-730; these read ISFDDGRSFEK, YVSDDAGLTWE, and YITHDHGKKWKK. An N-linked (GlcNAc...) asparagine glycan is attached at N970. Positions 1016–1048 are disordered; the sequence is SKKKKQSRITHNDGADWEPLQAPEKDSDDKPYD. Residues 1038–1048 show a composition bias toward basic and acidic residues; it reads PEKDSDDKPYD. BNR repeat units lie at residues 1102–1112 and 1143–1153; these read FMTTDAGITWK and YYSTDSGAKWD. N-linked (GlcNAc...) asparagine glycosylation is present at N1265. Residues 1355–1375 traverse the membrane as a helical segment; sequence FTLFLAIVLPFAAAGGVGYWV. The Cytoplasmic portion of the chain corresponds to 1376–1405; the sequence is WRNWDGKFGRIRLGEPGGGSAFDSDAPWVR. A helical transmembrane segment spans residues 1406-1426; the sequence is WPIAAVSGLVAVIAALPLVVG. The Lumenal portion of the chain corresponds to 1427 to 1490; that stretch reads SVWRWVAGRM…LGDEESDEDV (64 aa). The interval 1465 to 1490 is disordered; sequence RGRGEYSVVDPDEGELLGDEESDEDV. The segment covering 1474-1490 has biased composition (acidic residues); the sequence is DPDEGELLGDEESDEDV.

It belongs to the VPS10-related sortilin family.

Its subcellular location is the golgi apparatus. The protein resides in the trans-Golgi network membrane. It is found in the prevacuolar compartment membrane. In terms of biological role, functions as a sorting receptor in the Golgi compartment required for the intracellular sorting and delivery of soluble vacuolar proteins, like carboxypeptidase Y (CPY) and proteinase A. Executes multiple rounds of sorting by cycling between the late Golgi and a prevacuolar endosome-like compartment. The sequence is that of Vacuolar protein sorting/targeting protein 10 (vps10) from Pyrenophora teres f. teres (strain 0-1) (Barley net blotch fungus).